The chain runs to 225 residues: Ribonuclease 3 (225 aa).

The 123-residue stretch at 5-127 folds into the RNase III domain; sequence MNKLTSKLGY…IIGAIYLDSD (123 aa). E40 contributes to the Mg(2+) binding site. D44 is a catalytic residue. Mg(2+) is bound by residues D113 and E116. The active site involves E116. In terms of domain architecture, DRBM spans 154–224; that stretch reads DPKTRLQEFL…AETALEQLTN (71 aa).

The protein belongs to the ribonuclease III family. In terms of assembly, homodimer. The cofactor is Mg(2+).

Its subcellular location is the cytoplasm. The enzyme catalyses Endonucleolytic cleavage to 5'-phosphomonoester.. In terms of biological role, digests double-stranded RNA. Involved in the processing of primary rRNA transcript to yield the immediate precursors to the large and small rRNAs (23S and 16S). Processes some mRNAs, and tRNAs when they are encoded in the rRNA operon. Processes pre-crRNA and tracrRNA of type II CRISPR loci if present in the organism. The polypeptide is Ribonuclease 3 (Vibrio cholerae serotype O1 (strain ATCC 39315 / El Tor Inaba N16961)).